The sequence spans 298 residues: Protein RKD2 (298 aa).

Basic and acidic residues-rich tracts occupy residues 1–10 (MADHTTKEQK) and 81–102 (EQNR…VKET). Disordered stretches follow at residues 1 to 22 (MADH…PSFD) and 73 to 112 (SSAS…NERH). Positions 121–203 (SDITTYTTSS…KMEGEENAEK (83 aa)) constitute an RWP-RK domain. Residues 188 to 222 (NVKELQKMEGEENAEKLQDALEMLEKEKRTIEDLP) are a coiled coil. The interval 241-279 (NHKRKKKRSLKSDQSQVPSCSSSGSVPSDESVDEAGMES) is disordered. A compositionally biased stretch (low complexity) spans 252–269 (SDQSQVPSCSSSGSVPSD). Acidic residues predominate over residues 270-279 (ESVDEAGMES).

Its subcellular location is the nucleus. Its function is as follows. Putative transcription factor. In Arabidopsis thaliana (Mouse-ear cress), this protein is Protein RKD2 (RKD2).